The following is a 328-amino-acid chain: Cytochrome c biogenesis protein CcsA (328 aa).

The next 8 membrane-spanning stretches (helical) occupy residues 13-33 (ISFS…LVNL), 46-66 (GIII…IYSG), 73-93 (LYES…VSYF), 101-121 (LNTI…SGLL), 146-166 (MILG…LLVI), 234-254 (IISL…VWAN), 263-283 (WDPK…YLHI), and 295-315 (AIVA…VNLL).

Belongs to the CcmF/CycK/Ccl1/NrfE/CcsA family. May interact with Ccs1.

The protein resides in the plastid. Its subcellular location is the chloroplast thylakoid membrane. Functionally, required during biogenesis of c-type cytochromes (cytochrome c6 and cytochrome f) at the step of heme attachment. The protein is Cytochrome c biogenesis protein CcsA of Arabidopsis thaliana (Mouse-ear cress).